A 659-amino-acid polypeptide reads, in one-letter code: WD repeat-containing protein 48 homolog (659 aa).

WD repeat units follow at residues 27–66, 73–112, 115–154, 166–205, 208–247, 250–289, 292–331, and 337–376; these read RHRNGVNALQLDTINGRLYSAGRDAIIRVWNSMQNNSQEP, HHNDWVNDIVLCCGGRNLISASCDTTVKVWNAHKGFCMST, THRDYVQALAYAKDREQVASAGLDKAIFLWDINTLTALTA, GSKDSIYSLAMNPSGTVIVCGSTENTLRIWDPRTCNKIAK, GHAENVKALVVSEDGQHVISGSSDGKIKQWSIGQQRCVQT, VHSEGVWALLMTDNFSHVISGSRDKKIIMTDLRNPTNSVL, EERAPVLSLCYNYDQTGVWATTWNSDIRCWKLNPSEKLSF, and KGGAAIKKYHVLNDKRFMLTKDSEMNVAIYDVLKVKKVED. Positions 592–613 are disordered; the sequence is ASTGNSNSSQNNSQSDANSEGS. Residues 596-610 show a composition bias toward low complexity; the sequence is NSNSSQNNSQSDANS.

Belongs to the WD repeat WDR48 family. Catalytic component of the Usp12-46 deubiquitylase complex consisting of Usp12-46, Wdr20 and Uaf1; regulatory subunit that, together wtih Wdr20, stabilizes Usp12-46. The Usp12-46 deubiquitylase complex associates with arr/arrow; the interaction leads to deubiquitination and stabilization of arr/arrow.

Regulatory component of the Usp12-46 deubiquitylase complex. activates deubiquitination by increasing the catalytic turnover without increasing the affinity of deubiquitinating enzymes for the substrate. The complex deubiquitylates the wg/wingless-signaling receptor arr/arrow, which stabilizes the receptor and increases its concentration at the cell surface; this enhances the sensitivity of cells to wg/wingless-signal stimulation. This increases the amplitude and spatial range of the signaling response to the wg/wingless morphogen gradient, facilitating the precise concentration-dependent regulation of its target genes. Together with Wdr20 and Usp12-46 required for wg/wingless-mediated signaling in the wing imaginal disc and for wg/wingless-dependent regulation of intestinal stem cell proliferation. The polypeptide is WD repeat-containing protein 48 homolog (Aedes aegypti (Yellowfever mosquito)).